The primary structure comprises 97 residues: Large ribosomal subunit protein bL28 (97 aa).

The protein belongs to the bacterial ribosomal protein bL28 family.

The chain is Large ribosomal subunit protein bL28 from Rickettsia felis (strain ATCC VR-1525 / URRWXCal2) (Rickettsia azadi).